Reading from the N-terminus, the 300-residue chain is MARNSLPTITAGEAGLNRYLDEIRKFPMLEPQEEYMLGKRYAEHGDRDAAHKLVTSHLRLVAKIAMGYRGYGLPIGEVVSEGNVGLMQAVKKFDPERGFRLATYAMWWIKASIQEYILRSWSLVKMGTTANQKRLFFNLRRLKGRIQAIDDGDLKPEHVKEIATKLQVSEEEVISMNRRLHGDASLNAPIKASEGESGQWQDWLVDDHESQEAVLIEQDELETRRRMLAKAMGVLNDRERRIFEARRLAEDPVTLEELSSEFDISRERVRQIEVRAFEKVQEAVQKEALEAARALRVVDA.

The interval 53 to 122 is sigma-70 factor domain-2; the sequence is LVTSHLRLVA…IQEYILRSWS (70 aa). The Interaction with polymerase core subunit RpoC motif lies at 77–80; it reads EVVS. Positions 231–282 are sigma-70 factor domain-4; sequence AMGVLNDRERRIFEARRLAEDPVTLEELSSEFDISRERVRQIEVRAFEKVQE. Residues 255 to 274 constitute a DNA-binding region (H-T-H motif); the sequence is LEELSSEFDISRERVRQIEV.

It belongs to the sigma-70 factor family. RpoH subfamily. Interacts with the RNA polymerase core enzyme.

The protein localises to the cytoplasm. Sigma factors are initiation factors that promote the attachment of RNA polymerase to specific initiation sites and are then released. This sigma factor is involved in regulation of expression of heat shock genes. The protein is RNA polymerase sigma factor RpoH of Rhizobium radiobacter (Agrobacterium tumefaciens).